The sequence spans 351 residues: Histidinol-phosphate aminotransferase (351 aa).

Lys213 carries the post-translational modification N6-(pyridoxal phosphate)lysine.

The protein belongs to the class-II pyridoxal-phosphate-dependent aminotransferase family. Histidinol-phosphate aminotransferase subfamily. In terms of assembly, homodimer. Pyridoxal 5'-phosphate is required as a cofactor.

It catalyses the reaction L-histidinol phosphate + 2-oxoglutarate = 3-(imidazol-4-yl)-2-oxopropyl phosphate + L-glutamate. It functions in the pathway amino-acid biosynthesis; L-histidine biosynthesis; L-histidine from 5-phospho-alpha-D-ribose 1-diphosphate: step 7/9. This chain is Histidinol-phosphate aminotransferase, found in Clostridium kluyveri (strain NBRC 12016).